Reading from the N-terminus, the 294-residue chain is ATP phosphoribosyltransferase (294 aa).

Belongs to the ATP phosphoribosyltransferase family. Long subfamily. The cofactor is Mg(2+).

The protein localises to the cytoplasm. It carries out the reaction 1-(5-phospho-beta-D-ribosyl)-ATP + diphosphate = 5-phospho-alpha-D-ribose 1-diphosphate + ATP. It participates in amino-acid biosynthesis; L-histidine biosynthesis; L-histidine from 5-phospho-alpha-D-ribose 1-diphosphate: step 1/9. With respect to regulation, feedback inhibited by histidine. In terms of biological role, catalyzes the condensation of ATP and 5-phosphoribose 1-diphosphate to form N'-(5'-phosphoribosyl)-ATP (PR-ATP). Has a crucial role in the pathway because the rate of histidine biosynthesis seems to be controlled primarily by regulation of HisG enzymatic activity. The sequence is that of ATP phosphoribosyltransferase from Chlorobium phaeobacteroides (strain DSM 266 / SMG 266 / 2430).